Here is a 612-residue protein sequence, read N- to C-terminus: Dihydroxy-acid dehydratase (612 aa).

Asp-81 provides a ligand contact to Mg(2+). Residue Cys-122 participates in [2Fe-2S] cluster binding. 2 residues coordinate Mg(2+): Asp-123 and Lys-124. Lys-124 is subject to N6-carboxylysine. Cys-196 serves as a coordination point for [2Fe-2S] cluster. A Mg(2+)-binding site is contributed by Glu-492. The active-site Proton acceptor is the Ser-518.

The protein belongs to the IlvD/Edd family. As to quaternary structure, homodimer. The cofactor is [2Fe-2S] cluster. Requires Mg(2+) as cofactor.

The catalysed reaction is (2R)-2,3-dihydroxy-3-methylbutanoate = 3-methyl-2-oxobutanoate + H2O. The enzyme catalyses (2R,3R)-2,3-dihydroxy-3-methylpentanoate = (S)-3-methyl-2-oxopentanoate + H2O. Its pathway is amino-acid biosynthesis; L-isoleucine biosynthesis; L-isoleucine from 2-oxobutanoate: step 3/4. It functions in the pathway amino-acid biosynthesis; L-valine biosynthesis; L-valine from pyruvate: step 3/4. Its function is as follows. Functions in the biosynthesis of branched-chain amino acids. Catalyzes the dehydration of (2R,3R)-2,3-dihydroxy-3-methylpentanoate (2,3-dihydroxy-3-methylvalerate) into 2-oxo-3-methylpentanoate (2-oxo-3-methylvalerate) and of (2R)-2,3-dihydroxy-3-methylbutanoate (2,3-dihydroxyisovalerate) into 2-oxo-3-methylbutanoate (2-oxoisovalerate), the penultimate precursor to L-isoleucine and L-valine, respectively. The sequence is that of Dihydroxy-acid dehydratase from Paracoccus denitrificans (strain Pd 1222).